Reading from the N-terminus, the 353-residue chain is Guanine nucleotide-binding protein subunit beta-5 (353 aa).

WD repeat units lie at residues 61-100 (GHGNKVLCMDWCKDKRRIVSSSQDGKVIVWDSFTTNKEHA), 103-142 (MPCTWVMACAYAPSGCAIACGGLDNKCSVYPLTFDKNENM), 151-192 (MHTN…QSFH), 194-236 (HGAD…QAFE), 237-276 (THESDINSVRYYPSGDAFASGSDDATCRLYDLRADREVAI), 278-320 (SKES…RVSI), and 323-352 (GHENRVSTLRVSPDGTAFCSGSWDHTLRVW).

It belongs to the WD repeat G protein beta family. In terms of assembly, component of a complex composed of RGS9 (isoform RGS9-1), GNB5 and RGS9BP; within this complex, the presence of GNB5 stabilizes both itself and RGS9 and increases RGS9 GTPase-activating protein (GAP) activity. Interacts with RGS7, forming the RGS7-GNB5 complex; within this complex, the presence of GNB5 increases RGS7 GTPase-activating protein (GAP) activity. Interacts with GPR158; promotes the GTPase activator activity of the RGS7-GNB5 complex in absence of glycine, in contrast GTPase activator activity of the RGS7-GNB5 complex is inhibited in presence of glycine. Interacts with RGS6.

It is found in the membrane. Its function is as follows. Enhances GTPase-activating protein (GAP) activity of regulator of G protein signaling (RGS) proteins, such as RGS7 and RGS9, hence involved in the termination of the signaling initiated by the G protein coupled receptors (GPCRs) by accelerating the GTP hydrolysis on the G-alpha subunits, thereby promoting their inactivation. Increases RGS7 GTPase-activating protein (GAP) activity, thereby regulating mood and cognition. Increases RGS9 GTPase-activating protein (GAP) activity, hence contributes to the deactivation of G protein signaling initiated by D(2) dopamine receptors. May play an important role in neuronal signaling, including in the parasympathetic, but not sympathetic, control of heart rate. The chain is Guanine nucleotide-binding protein subunit beta-5 (GNB5) from Oryctolagus cuniculus (Rabbit).